The following is a 490-amino-acid chain: Betaine aldehyde dehydrogenase (490 aa).

Asp93 contributes to the K(+) binding site. 150-152 contributes to the NAD(+) binding site; the sequence is GAW. Lys162 functions as the Charge relay system in the catalytic mechanism. An NAD(+)-binding site is contributed by 176-179; sequence KPSE. Val180 contacts K(+). An NAD(+)-binding site is contributed by 230-233; the sequence is GVKT. Leu246 provides a ligand contact to K(+). Glu252 serves as the catalytic Proton acceptor. NAD(+) is bound by residues Gly254, Cys286, and Glu387. Cys286 functions as the Nucleophile in the catalytic mechanism. The residue at position 286 (Cys286) is a Cysteine sulfenic acid (-SOH). K(+) is bound by residues Lys457 and Gly460. Glu464 serves as the catalytic Charge relay system.

It belongs to the aldehyde dehydrogenase family. In terms of assembly, dimer of dimers. The cofactor is K(+).

The catalysed reaction is betaine aldehyde + NAD(+) + H2O = glycine betaine + NADH + 2 H(+). The protein operates within amine and polyamine biosynthesis; betaine biosynthesis via choline pathway; betaine from betaine aldehyde: step 1/1. Involved in the biosynthesis of the osmoprotectant glycine betaine. Catalyzes the irreversible oxidation of betaine aldehyde to the corresponding acid. The protein is Betaine aldehyde dehydrogenase of Serratia proteamaculans (strain 568).